The chain runs to 792 residues: Probable exo-1,4-beta-xylosidase xlnD (792 aa).

The signal sequence occupies residues 1–20 (MSVAKSIAAVLVALLPGALA). N23, N87, N118, N142, and N246 each carry an N-linked (GlcNAc...) asparagine glycan. D310 is a catalytic residue. N-linked (GlcNAc...) asparagine glycosylation is found at N326, N385, N404, N440, N477, N518, N679, and N701.

This sequence belongs to the glycosyl hydrolase 3 family.

The protein localises to the secreted. It carries out the reaction Hydrolysis of (1-&gt;4)-beta-D-xylans, to remove successive D-xylose residues from the non-reducing termini.. Its pathway is glycan degradation; xylan degradation. In terms of biological role, xylan 1,4-beta-xylosidase involved in the hydrolysis of xylan, a major structural heterogeneous polysaccharide found in plant biomass representing the second most abundant polysaccharide in the biosphere, after cellulose. The sequence is that of Probable exo-1,4-beta-xylosidase xlnD (xlnD) from Aspergillus fumigatus (strain CBS 144.89 / FGSC A1163 / CEA10) (Neosartorya fumigata).